A 186-amino-acid chain; its full sequence is Peptidyl-tRNA hydrolase (186 aa).

Tyr-14 is a tRNA binding site. The Proton acceptor role is filled by His-19. Tyr-64, Asn-66, and Asn-112 together coordinate tRNA.

Belongs to the PTH family. As to quaternary structure, monomer.

It is found in the cytoplasm. The enzyme catalyses an N-acyl-L-alpha-aminoacyl-tRNA + H2O = an N-acyl-L-amino acid + a tRNA + H(+). Hydrolyzes ribosome-free peptidyl-tRNAs (with 1 or more amino acids incorporated), which drop off the ribosome during protein synthesis, or as a result of ribosome stalling. In terms of biological role, catalyzes the release of premature peptidyl moieties from peptidyl-tRNA molecules trapped in stalled 50S ribosomal subunits, and thus maintains levels of free tRNAs and 50S ribosomes. This is Peptidyl-tRNA hydrolase from Bacillus anthracis.